We begin with the raw amino-acid sequence, 748 residues long: Formate acetyltransferase (748 aa).

The region spanning 5–618 is the PFL domain; the sequence is NNHTNAWQGF…KTGNTPDGRK (614 aa). The active-site S-acetylcysteine intermediate is the cysteine 412. The active-site Cysteine radical intermediate is the cysteine 413. The region spanning 625 to 748 is the Glycine radical domain; sequence PGANPMHGRD…VISRTFHESM (124 aa). Glycine 723 is subject to Glycine radical.

Belongs to the glycyl radical enzyme (GRE) family. PFL subfamily. In terms of assembly, homodimer.

The protein localises to the cytoplasm. It catalyses the reaction formate + acetyl-CoA = pyruvate + CoA. It participates in fermentation; pyruvate fermentation; formate from pyruvate: step 1/1. Catalyzes the conversion of pyruvate to formate and acetyl-CoA. The sequence is that of Formate acetyltransferase (pflB) from Staphylococcus epidermidis (strain ATCC 35984 / DSM 28319 / BCRC 17069 / CCUG 31568 / BM 3577 / RP62A).